A 127-amino-acid chain; its full sequence is Succinate dehydrogenase cytochrome b560 subunit (127 aa).

Transmembrane regions (helical) follow at residues 36–53 (VGLA…RIIL) and 60–83 (NLLT…FILL). Position 88 (histidine 88) interacts with heme. The helical transmembrane segment at 109–126 (LSKFSLFLLVSLSLILIF) threads the bilayer.

It belongs to the cytochrome b560 family. In terms of assembly, forms part of complex II containing four subunits: a 70 kDa flavoprotein (FP), a 27 kDa iron-sulfur protein (IP), a cytochrome B and a membrane-anchoring protein. It depends on heme as a cofactor.

It is found in the mitochondrion inner membrane. The protein operates within carbohydrate metabolism; tricarboxylic acid cycle. Its function is as follows. Membrane-anchoring subunit of succinate dehydrogenase (SDH) that is involved in complex II of the mitochondrial electron transport chain and is responsible for transferring electrons from succinate to ubiquinone (coenzyme Q). This is Succinate dehydrogenase cytochrome b560 subunit (SDH3) from Chondrus crispus (Carrageen Irish moss).